Reading from the N-terminus, the 147-residue chain is Low molecular weight protein-tyrosine-phosphatase Wzb (147 aa).

Residue C9 is the Nucleophile of the active site. The active site involves R15. Residue D115 is the Proton donor of the active site.

The protein belongs to the low molecular weight phosphotyrosine protein phosphatase family.

It catalyses the reaction O-phospho-L-tyrosyl-[protein] + H2O = L-tyrosyl-[protein] + phosphate. Its pathway is glycan metabolism; exopolysaccharide biosynthesis. In terms of biological role, dephosphorylates Wzc. Required for the extracellular polysaccharide colanic acid synthesis. Probably involved in the export of colanic acid from the cell to medium. Involved in protection of cells against contact-dependent growth inhibition (CDI). In Escherichia coli O157:H7, this protein is Low molecular weight protein-tyrosine-phosphatase Wzb (wzb).